The sequence spans 565 residues: Heme/hemopexin transporter protein HuxB (565 aa).

An N-terminal signal peptide occupies residues 1 to 26; sequence MKMRPRYSVIASAVSLGFVLSKSVMA. The 78-residue stretch at 73 to 150 folds into the POTRA domain; the sequence is FPLTQVQILD…GTVKILLLKG (78 aa).

Belongs to the TPS (TC 1.B.20) family.

It localises to the cell outer membrane. In terms of biological role, likely functions in the release of soluble HxuA from the cell. Functionally, probable member of a two partner secretion pathway (TPS) in which it mediates the secretion of HuxA. The sequence is that of Heme/hemopexin transporter protein HuxB (hxuB) from Haemophilus influenzae.